Reading from the N-terminus, the 500-residue chain is Ephrin type-B receptor 3 (500 aa).

The region spanning 1–64 is the Fibronectin type-III domain; that stretch reads PLLVLDLIIQ…NPVDFSTSLY (64 aa). Residues 1 to 113 lie on the Extracellular side of the membrane; that stretch reads PLLVLDLIIQ…ERSVQDLLPL (113 aa). Positions 76-103 are disordered; that stretch reads HLRRREELTTTTTGLKSREERFQKSDDP. A compositionally biased stretch (basic and acidic residues) spans 91–103; the sequence is KSREERFQKSDDP. A helical transmembrane segment spans residues 114 to 134; the sequence is IVGSASAGFVVILAMIVIAVV. The Cytoplasmic segment spans residues 135-500; that stretch reads CLRRQRTGSE…QMSQTLPIRV (366 aa). Phosphotyrosine; by autocatalysis is present on Y168. The 264-residue stretch at 187–450 folds into the Protein kinase domain; the sequence is VKIEEVIGAG…QIVSTLDKFL (264 aa). Residues 193 to 201 and K219 contribute to the ATP site; that span reads IGAGEFGEV. D312 serves as the catalytic Proton acceptor. The SAM domain maps to 421–500; sequence LHQLMLECWV…QMSQTLPIRV (80 aa). The PDZ-binding signature appears at 498–500; sequence IRV.

It belongs to the protein kinase superfamily. Tyr protein kinase family. Ephrin receptor subfamily. In terms of assembly, heterotetramer upon binding of the ligand. The heterotetramer is composed of an ephrin dimer and a receptor dimer. Oligomerization is probably required to induce biological responses. Phosphorylated. Autophosphorylates upon ligand-binding. Autophosphorylation on Tyr-168 is required for interaction with SH2 domain-containing proteins. As to expression, widely expressed in the developing nervous system.

Its subcellular location is the cell membrane. The protein resides in the cell projection. It localises to the dendrite. It catalyses the reaction L-tyrosyl-[protein] + ATP = O-phospho-L-tyrosyl-[protein] + ADP + H(+). Receptor tyrosine kinase which binds promiscuously transmembrane ephrin-B family ligands residing on adjacent cells, leading to contact-dependent bidirectional signaling into neighboring cells. The signaling pathway downstream of the receptor is referred to as forward signaling while the signaling pathway downstream of the ephrin ligand is referred to as reverse signaling. Generally has an overlapping and redundant function with EPHB2. Like EPHB2, functions in axon guidance during development. In addition to its role in axon guidance also plays an important redundant role with other ephrin-B receptors in development and maturation of dendritic spines and the formation of excitatory synapses. May control other aspects of development through regulation of cell migration and positioning. May play a role in early pattern formation within the developing nervous system. This is Ephrin type-B receptor 3 (ephb3) from Danio rerio (Zebrafish).